Here is a 434-residue protein sequence, read N- to C-terminus: UDP-N-acetylglucosamine 1-carboxyvinyltransferase 1 (434 aa).

A phosphoenolpyruvate-binding site is contributed by 22–23 (KN). Arginine 93 contributes to the UDP-N-acetyl-alpha-D-glucosamine binding site. The active-site Proton donor is the cysteine 117. Cysteine 117 bears the 2-(S-cysteinyl)pyruvic acid O-phosphothioketal mark. UDP-N-acetyl-alpha-D-glucosamine contacts are provided by residues 122-126 (RPIDQ), aspartate 306, and valine 328.

It belongs to the EPSP synthase family. MurA subfamily.

The protein resides in the cytoplasm. It catalyses the reaction phosphoenolpyruvate + UDP-N-acetyl-alpha-D-glucosamine = UDP-N-acetyl-3-O-(1-carboxyvinyl)-alpha-D-glucosamine + phosphate. It participates in cell wall biogenesis; peptidoglycan biosynthesis. Functionally, cell wall formation. Adds enolpyruvyl to UDP-N-acetylglucosamine. The protein is UDP-N-acetylglucosamine 1-carboxyvinyltransferase 1 of Bacillus cereus (strain ATCC 14579 / DSM 31 / CCUG 7414 / JCM 2152 / NBRC 15305 / NCIMB 9373 / NCTC 2599 / NRRL B-3711).